The sequence spans 535 residues: Alpha-1,3-mannosyl-glycoprotein 4-beta-N-acetylglucosaminyltransferase A (535 aa).

Over 1-6 (MRLRNG) the chain is Cytoplasmic. Residues 7-27 (TVATVLAFITSFLTLSWYTTW) form a helical; Signal-anchor for type II membrane protein membrane-spanning segment. The Lumenal portion of the chain corresponds to 28-535 (QNGKEKVIAY…NEIHIKKVTN (508 aa)). The stretch at 31–57 (KEKVIAYQREFLALKERLRIAEHRISQ) forms a coiled coil. 2 N-linked (GlcNAc...) asparagine glycosylation sites follow: asparagine 77 and asparagine 458. Serine 474 is subject to Phosphoserine.

The protein belongs to the glycosyltransferase 54 family. The cofactor is a divalent metal cation. In terms of processing, N-glycosylated. As to expression, highly expressed in small intestine, kidney, lung and spleen. Weakly expressed in brain, heart and liver.

It is found in the golgi apparatus membrane. The protein resides in the secreted. It catalyses the reaction N(4)-{beta-D-GlcNAc-(1-&gt;2)-alpha-D-Man-(1-&gt;3)-[beta-D-GlcNAc-(1-&gt;2)-alpha-D-Man-(1-&gt;6)]-beta-D-Man-(1-&gt;4)-beta-D-GlcNAc-(1-&gt;4)-beta-D-GlcNAc}-L-asparaginyl-[protein] + UDP-N-acetyl-alpha-D-glucosamine = N(4)-{beta-D-GlcNAc-(1-&gt;2)-[beta-D-GlcNAc-(1-&gt;4)]-alpha-D-Man-(1-&gt;3)-[beta-D-GlcNAc-(1-&gt;2)-alpha-D-Man-(1-&gt;6)]-beta-D-Man-(1-&gt;4)-beta-D-GlcNAc-(1-&gt;4)-beta-D-GlcNAc}-L-asparaginyl-[protein] + UDP + H(+). It carries out the reaction an N(4)-{beta-D-GlcNAc-(1-&gt;2)-alpha-D-Man-(1-&gt;3)-[alpha-D-Man-(1-&gt;6)]-beta-D-Man-(1-&gt;4)-beta-D-GlcNAc-(1-&gt;4)-beta-D-GlcNAc}-L-asparaginyl-[protein] + UDP-N-acetyl-alpha-D-glucosamine = an N(4)-{beta-D-GlcNAc-(1-&gt;2)-[beta-D-GlcNAc-(1-&gt;4)]-alpha-D-Man-(1-&gt;3)-[alpha-D-Man-(1-&gt;6)]-beta-D-Man-(1-&gt;4)-beta-D-GlcNAc-(1-&gt;4)-beta-D-GlcNAc}-L-asparaginyl-[protein] + UDP + H(+). The catalysed reaction is an N(4)-{beta-D-GlcNAc-(1-&gt;2)-alpha-D-Man-(1-&gt;3)-[beta-D-GlcNAc-(1-&gt;2)-[beta-D-GlcNAc-(1-&gt;6)]-alpha-D-Man-(1-&gt;6)]-beta-D-Man-(1-&gt;4)-beta-D-GlcNAc-(1-&gt;4)-beta-D-GlcNAc}-L-asparaginyl-[protein] + UDP-N-acetyl-alpha-D-glucosamine = an N(4)-{beta-D-GlcNAc-(1-&gt;2)-[beta-D-GlcNAc-(1-&gt;4)]-alpha-D-Man-(1-&gt;3)-[beta-D-GlcNAc-(1-&gt;2)-[beta-D-GlcNAc-(1-&gt;6)]-alpha-D-Man-(1-&gt;6)]-beta-D-Man-(1-&gt;4)-beta-D-GlcNAc-(1-&gt;4)-beta-D-GlcNAc}-L-asparaginyl-[protein] + UDP + H(+). The enzyme catalyses an N(4)-{beta-D-GlcNAc-(1-&gt;2)-alpha-D-Man-(1-&gt;3)-[beta-D-GlcNAc-(1-&gt;2)-alpha-D-Man-(1-&gt;6)]-beta-D-Man-(1-&gt;4)-beta-D-GlcNAc-(1-&gt;4)-[alpha-L-Fuc-(1-&gt;6)]-beta-D-GlcNAc}-L-asparaginyl-[protein] + UDP-N-acetyl-alpha-D-glucosamine = N(4)-{beta-D-GlcNAc-(1-&gt;2)-[beta-D-GlcNAc-(1-&gt;4)]-alpha-D-Man-(1-&gt;3)-[beta-D-GlcNAc-(1-&gt;2)-alpha-D-Man-(1-&gt;6)]-beta-D-Man-(1-&gt;4)-beta-D-GlcNAc-(1-&gt;4)-[alpha-L-Fuc-(1-&gt;6)]-beta-D-GlcNAc}-asparaginyl-[protein] + UDP + H(+). It catalyses the reaction an N(4)-{beta-D-GlcNAc-(1-&gt;2)-alpha-D-Man-(1-&gt;3)-[beta-D-Gal-(1-&gt;4)-beta-D-GlcNAc-(1-&gt;2)-alpha-D-Man-(1-&gt;6)]-beta-D-Man-(1-&gt;4)-beta-D-GlcNAc-(1-&gt;4)-beta-D-GlcNAc}-L-asparaginyl-[protein] + UDP-N-acetyl-alpha-D-glucosamine = an N(4)-{beta-D-GlcNAc-(1-&gt;2)-[beta-D-GlcNAc-(1-&gt;4)]-alpha-D-Man-(1-&gt;3)-[beta-D-Gal-(1-&gt;4)-beta-D-GlcNAc-(1-&gt;2)-alpha-D-Man-(1-&gt;6)]-beta-D-Man-(1-&gt;4)-beta-D-GlcNAc-(1-&gt;4)-beta-D-GlcNAc}-L-asparaginyl-[protein] + UDP + H(+). It carries out the reaction N(4)-{beta-D-GlcNAc-(1-&gt;2)-alpha-D-Man-(1-&gt;3)-[alpha-D-Man-(1-&gt;3)-{alpha-D-Man-(1-&gt;6)}-alpha-D-Man-(1-&gt;6)]-beta-D-Man-(1-&gt;4)-beta-D-GlcNAc-(1-&gt;4)-beta-D-GlcNAc}-asparaginyl-[protein] + UDP-N-acetyl-alpha-D-glucosamine = N(4)-{beta-D-GlcNAc-(1-&gt;2)-[beta-D-GlcNAc-(1-&gt;4)]-alpha-D-Man-(1-&gt;3)-[alpha-D-Man-(1-&gt;3)-{alpha-D-Man-(1-&gt;6)}-alpha-D-Man-(1-&gt;6)]-beta-D-Man-(1-&gt;4)-beta-D-GlcNAc-(1-&gt;4)-beta-D-GlcNAc}-asparaginyl-[protein] + UDP + H(+). The catalysed reaction is N(4)-{beta-D-GlcNAc-(1-&gt;2)-alpha-D-Man-(1-&gt;3)-beta-D-Man-(1-&gt;4)-beta-D-GlcNAc-(1-&gt;4)-beta-D-GlcNAc}-asparaginyl-[protein] + UDP-N-acetyl-alpha-D-glucosamine = N(4)-{beta-D-GlcNAc-(1-&gt;2)-[beta-D-GlcNAc-(1-&gt;4)]-alpha-D-Man-(1-&gt;3)-beta-D-Man-(1-&gt;4)-beta-D-GlcNAc-(1-&gt;4)-beta-D-GlcNAc}-asparaginyl-[protein] + UDP + H(+). It participates in protein modification; protein glycosylation. Inhibited by UDP. Functionally, glycosyltransferase that catalyze the transfer of GlcNAc from UDP-GlcNAc to the GlcNAcbeta1-2Manalpha1-3 arm of the core structure of N-linked glycans through a beta1-4 linkage and participates in the production of tri- and tetra-antennary N-linked sugar chains. Involved in glucose transport by mediating SLC2A2/GLUT2 glycosylation, thereby controlling cell-surface expression of SLC2A2 in pancreatic beta cells. The protein is Alpha-1,3-mannosyl-glycoprotein 4-beta-N-acetylglucosaminyltransferase A of Bos taurus (Bovine).